The primary structure comprises 1432 residues: MKLSKLEKALKKVRVTPQRDDTYTIGNVLWAIRMCRLMGLDCCIDEATAAEVAILIGRFQSLDLQDSPLKGKDEKAILTTLKVLWSLLAGHHPENSDMAEKYWEAWTIRERESQKEEEGEITSIYPQLRKNFPAVSTSDGSPRYDPDLTKQLKIWADATEKHGVDHHAVNILGVITANLTQSEIRLLLQSTPQWRLDIQLIESKLNAREHAHRVWKESHPEAPKTDEIIGKGLTAAEQATLTTQECRDTYRQWVLEAALEVAQGKHDRPGPINIHQGPKEPYPEFVNKLVTALEGMAAPETTKQYLLDHLSVDHANEDCRAVLLPLGPSAPMERKLEACRAVGSSKQKMQFLAEAFAAINVKGDGEVQRCYGCGKPGHIRRDCKNQKCFKCGKPGHLQRNCKSKNREALLCPFWAEERIPSGEDFCDPVCSPVGIRLNRQPFIKIFLGGRWVRALIDTGADEVVLKDIHWDRIKGVPAASVVQVGVTGRNIARRKSNVEWRFKNRYGIVDVLFSNTPVNLLGRSVLQSIVTKFTLAAHTKQIQPLPVKLHGPGPRVPQWPLTLEKYKALKEIVEELLKDGKISRTPWDNPFNTPVFVIKKKGGSKWRMLMDFRALNKVTNKGQEFQIGLPYPPGIQQCEHITAIDIKDAYFTIPLDENFRQYTAFSVVPVNREGPLERYHWNVLPQGWVCSPAIYQTTTQEIIAEIKDRFPDIVLYQYMDDLLIGSDRPDHKRVVSEIREELGAYGFKTPEEKIQEEQVQWLGYELTPKRWRFQPRQIKIKKVVTVNELQQMIGNCVWVQPEVKIPLSPLSDLLKGKTDLKDKIKLTEEAIQCLETVNKRLKDPEWKERIKEGTELVVKIQLIPEGVVYDLLQDGNPIWGGVKGWDYNHANKIKKMLSIMKKLSRIVMIMTGREVSFLIPGDSEDWESALQRINTLTEIPEVKFYKHACRWTSVCGPVIERYPTYYTDGGKKGSKAAAAYWREGKIRREVFPGTNQQAELKAVLMALQDGPAKMNIITDSRYAFEGMREEPETWGREGLWKEIGEELRRKEYVGVSWVPGHKGIGGNTEVDQEVQKALQGPITVSLPQEILLEAGETKLVKTGIFWEGLRPCKLRPEEGLKLKGSLIDEELQLEITNTQNSRVGIRQGQTIGTCFIEAIPQAIEEHEKWHTTAEILAREFQLPRRVAREIVHRCQACKRTVSCPRRGTNPRERFLWQMDNTHLEGKIIWVAVETNSGLIEARVIPEESAQSIVFCILMLVYRYTVYHIHSDNGPCFIAQKVEALCKYLKITKTTGIPYNPQAQAIVERTHRDIKDKIAAFREDCETVEAALSLTLVALNKKRGGIGGHTPYEIYLESEYNKYQEQQNHYNNFKTEKWAYVRDKRKVWKGPYKVLWDGEGAAVVEENAMPTLYPHRHMRFIPPPNTDTQDGNL.

CCHC-type zinc fingers lie at residues 368-385 (QRCY…DCKN) and 386-403 (QKCF…NCKS). The Peptidase A2 domain maps to 452 to 525 (VRALIDTGAD…TPVNLLGRSV (74 aa)). Catalysis depends on Asp-457, which acts as the For protease activity; shared with dimeric partner. Positions 579-766 (DGKISRTPWD…EQVQWLGYEL (188 aa)) constitute a Reverse transcriptase domain. Residues Asp-645, Asp-720, and Asp-721 each coordinate Mg(2+). A coiled-coil region spans residues 815-843 (KGKTDLKDKIKLTEEAIQCLETVNKRLKD). The region spanning 959–1079 (IERYPTYYTD…VDQEVQKALQ (121 aa)) is the RNase H type-1 domain. Residues Asp-968, Glu-999, Asp-1019, and Asp-1071 each contribute to the Mg(2+) site. An Integrase-type zinc finger spans residues 1157-1198 (EAIPQAIEEHEKWHTTAEILAREFQLPRRVAREIVHRCQACK). Zn(2+) is bound by residues His-1166, His-1170, Cys-1194, and Cys-1197. An Integrase catalytic domain is found at 1206–1358 (RGTNPRERFL…TPYEIYLESE (153 aa)). 2 residues coordinate Mg(2+): Asp-1219 and Asp-1271. Residues 1376–1422 (KWAYVRDKRKVWKGPYKVLWDGEGAAVVEENAMPTLYPHRHMRFIPP) constitute a DNA-binding region (integrase-type).

Post-translationally, specific enzymatic cleavages by the viral protease yield mature proteins. The protease is released by autocatalytic cleavage. The polyprotein is cleaved during and after budding, this process is termed maturation.

It localises to the virion. It carries out the reaction DNA(n) + a 2'-deoxyribonucleoside 5'-triphosphate = DNA(n+1) + diphosphate. The enzyme catalyses Endohydrolysis of RNA in RNA/DNA hybrids. Three different cleavage modes: 1. sequence-specific internal cleavage of RNA. Human immunodeficiency virus type 1 and Moloney murine leukemia virus enzymes prefer to cleave the RNA strand one nucleotide away from the RNA-DNA junction. 2. RNA 5'-end directed cleavage 13-19 nucleotides from the RNA end. 3. DNA 3'-end directed cleavage 15-20 nucleotides away from the primer terminus.. It catalyses the reaction 3'-end directed exonucleolytic cleavage of viral RNA-DNA hybrid.. Functionally, matrix protein p16 forms the outer shell of the core of the virus, lining the inner surface of the viral membrane. Capsid protein p26 forms the conical core of the virus that encapsulates the genomic RNA-nucleocapsid complex. In terms of biological role, the aspartyl protease mediates proteolytic cleavages of Gag and Gag-Pol polyproteins during or shortly after the release of the virion from the plasma membrane. Cleavages take place as an ordered, step-wise cascade to yield mature proteins. This process is called maturation. Displays maximal activity during the budding process just prior to particle release from the cell. Its function is as follows. Reverse transcriptase/ribonuclease H (RT) is a multifunctional enzyme that converts the viral RNA genome into dsDNA in the cytoplasm, shortly after virus entry into the cell. This enzyme displays a DNA polymerase activity that can copy either DNA or RNA templates, and a ribonuclease H (RNase H) activity that cleaves the RNA strand of RNA-DNA heteroduplexes in a partially processive 3' to 5' endonucleasic mode. Conversion of viral genomic RNA into dsDNA requires many steps. A tRNA binds to the primer-binding site (PBS) situated at the 5'-end of the viral RNA. RT uses the 3' end of the tRNA primer to perform a short round of RNA-dependent minus-strand DNA synthesis. The reading proceeds through the U5 region and ends after the repeated (R) region which is present at both ends of viral RNA. The portion of the RNA-DNA heteroduplex is digested by the RNase H, resulting in a ssDNA product attached to the tRNA primer. This ssDNA/tRNA hybridizes with the identical R region situated at the 3' end of viral RNA. This template exchange, known as minus-strand DNA strong stop transfer, can be either intra- or intermolecular. RT uses the 3' end of this newly synthesized short ssDNA to perform the RNA-dependent minus-strand DNA synthesis of the whole template. RNase H digests the RNA template except for a polypurine tract (PPT) situated at the 5'-end of the genome. It is not clear if both polymerase and RNase H activities are simultaneous. RNase H probably can proceed both in a polymerase-dependent (RNA cut into small fragments by the same RT performing DNA synthesis) and a polymerase-independent mode (cleavage of remaining RNA fragments by free RTs). Secondly, RT performs DNA-directed plus-strand DNA synthesis using the PPT that has not been removed by RNase H as primer. PPT and tRNA primers are then removed by RNase H. The 3' and 5' ssDNA PBS regions hybridize to form a circular dsDNA intermediate. Strand displacement synthesis by RT to the PBS and PPT ends produces a blunt ended, linear dsDNA copy of the viral genome that includes long terminal repeats (LTRs) at both ends. Functionally, integrase catalyzes viral DNA integration into the host chromosome, by performing a series of DNA cutting and joining reactions. This enzyme activity takes place after virion entry into a cell and reverse transcription of the RNA genome in dsDNA. The polypeptide is Gag-Pol polyprotein (gag-pol) (Jembrana disease virus (JDV)).